Here is a 100-residue protein sequence, read N- to C-terminus: Small ribosomal subunit protein uS14c (100 aa).

It belongs to the universal ribosomal protein uS14 family. As to quaternary structure, part of the 30S ribosomal subunit.

It localises to the plastid. Its subcellular location is the chloroplast. In terms of biological role, binds 16S rRNA, required for the assembly of 30S particles. The sequence is that of Small ribosomal subunit protein uS14c from Anthoceros angustus (Hornwort).